Reading from the N-terminus, the 290-residue chain is Ribosomal RNA small subunit methyltransferase A (290 aa).

S-adenosyl-L-methionine contacts are provided by His-37, Val-39, Gly-64, Glu-85, Asp-115, and Asn-132.

This sequence belongs to the class I-like SAM-binding methyltransferase superfamily. rRNA adenine N(6)-methyltransferase family. RsmA subfamily.

It localises to the cytoplasm. The catalysed reaction is adenosine(1518)/adenosine(1519) in 16S rRNA + 4 S-adenosyl-L-methionine = N(6)-dimethyladenosine(1518)/N(6)-dimethyladenosine(1519) in 16S rRNA + 4 S-adenosyl-L-homocysteine + 4 H(+). In terms of biological role, specifically dimethylates two adjacent adenosines (A1518 and A1519) in the loop of a conserved hairpin near the 3'-end of 16S rRNA in the 30S particle. May play a critical role in biogenesis of 30S subunits. This is Ribosomal RNA small subunit methyltransferase A from Acidothermus cellulolyticus (strain ATCC 43068 / DSM 8971 / 11B).